We begin with the raw amino-acid sequence, 224 residues long: Serum amyloid P-component (224 aa).

An N-terminal signal peptide occupies residues 1 to 20 (MDKLLLWMFVFTSLLSEAFC). One can recognise a Pentraxin (PTX) domain in the interval 25–224 (KRKVFVFPRE…YVVIRPRVWD (200 aa)). N-linked (GlcNAc...) asparagine glycosylation occurs at Asn52. The cysteines at positions 56 and 115 are disulfide-linked. Ca(2+) contacts are provided by Asp78, Asn79, Glu156, Gln157, Asp158, and Gln168.

It belongs to the pentraxin family. Homopentamer. Pentraxin (or pentaxin) have a discoid arrangement of 5 non-covalently bound subunits. Requires Ca(2+) as cofactor.

The protein localises to the secreted. This is Serum amyloid P-component (Apcs) from Mus musculus (Mouse).